We begin with the raw amino-acid sequence, 342 residues long: Oxygen-dependent coproporphyrinogen-III oxidase (342 aa).

Serine 107 serves as a coordination point for substrate. A divalent metal cation contacts are provided by histidine 111 and histidine 121. Histidine 121 serves as the catalytic Proton donor. 123-125 (NYR) lines the substrate pocket. The a divalent metal cation site is built by histidine 155 and histidine 185. The segment at 277-312 (YVEFNLVYDRGTIFGLQTNGRTESILMSLPPLVRWE) is important for dimerization.

It belongs to the aerobic coproporphyrinogen-III oxidase family. As to quaternary structure, homodimer. A divalent metal cation is required as a cofactor.

It is found in the cytoplasm. The enzyme catalyses coproporphyrinogen III + O2 + 2 H(+) = protoporphyrinogen IX + 2 CO2 + 2 H2O. The protein operates within porphyrin-containing compound metabolism; protoporphyrin-IX biosynthesis; protoporphyrinogen-IX from coproporphyrinogen-III (O2 route): step 1/1. Its function is as follows. Involved in the heme and chlorophyll biosynthesis. Catalyzes the aerobic oxidative decarboxylation of propionate groups of rings A and B of coproporphyrinogen-III to yield the vinyl groups in protoporphyrinogen-IX. The sequence is that of Oxygen-dependent coproporphyrinogen-III oxidase from Synechococcus sp. (strain ATCC 27144 / PCC 6301 / SAUG 1402/1) (Anacystis nidulans).